Reading from the N-terminus, the 554-residue chain is Sesquithujene synthase A (554 aa).

Mg(2+) contacts are provided by aspartate 308 and aspartate 312. Substrate-binding residues include aspartate 308 and aspartate 312. The short motif at 308-312 (DDMFD) is the DDXXD motif element. A determine the stereoselectivity of the enzyme region spans residues 407–411 (SIGAN). Residues arginine 449 and asparagine 452 each coordinate substrate. Asparagine 452, serine 456, and glutamate 460 together coordinate Mg(2+).

Belongs to the terpene synthase family. Monomer. The cofactor is Mg(2+). Requires Mn(2+) as cofactor. As to expression, highly expressed in the husk. Detected in leaves.

It localises to the cytoplasm. It catalyses the reaction (2E,6E)-farnesyl diphosphate = sesquithujene + diphosphate. The enzyme catalyses (2Z,6Z)-farnesyl diphosphate = (1S,5S,6S)-alpha-bergamotene + diphosphate. It carries out the reaction (2E,6E)-farnesyl diphosphate = (E)-beta-farnesene + diphosphate. The catalysed reaction is (2E,6E)-farnesyl diphosphate = (S)-beta-bisabolene + diphosphate. It catalyses the reaction (2Z,6E)-farnesyl diphosphate = (-)-beta-curcumene + diphosphate. The enzyme catalyses (2E,6E)-farnesyl diphosphate = gamma-curcumene + diphosphate. It carries out the reaction (2E,6E)-farnesyl diphosphate = sesquisabinene B + diphosphate. It participates in secondary metabolite biosynthesis; terpenoid biosynthesis. Sesquiterpene synthase involved in the production after herbivore attack of a blend of volatiles that attracts natural enemies of herbivores. Converts farnesyl diphosphate to sesquithujene, (S)-beta-bisabolene, (Z)-alpha-bergamotene, sesquisabinene B and several minor products. Can also act in vitro as a monoterpene synthase, converting geranyl diphosphate to (S)-(-)-limonene, beta-myrcene and 11 other monoterpenes. This Zea mays (Maize) protein is Sesquithujene synthase A.